We begin with the raw amino-acid sequence, 446 residues long: ATP-dependent protease ATPase subunit HslU (446 aa).

Residues valine 17, 59–64 (GVGKTE), aspartate 255, glutamate 320, and arginine 392 each bind ATP.

This sequence belongs to the ClpX chaperone family. HslU subfamily. In terms of assembly, a double ring-shaped homohexamer of HslV is capped on each side by a ring-shaped HslU homohexamer. The assembly of the HslU/HslV complex is dependent on binding of ATP.

It is found in the cytoplasm. In terms of biological role, ATPase subunit of a proteasome-like degradation complex; this subunit has chaperone activity. The binding of ATP and its subsequent hydrolysis by HslU are essential for unfolding of protein substrates subsequently hydrolyzed by HslV. HslU recognizes the N-terminal part of its protein substrates and unfolds these before they are guided to HslV for hydrolysis. In Azotobacter vinelandii (strain DJ / ATCC BAA-1303), this protein is ATP-dependent protease ATPase subunit HslU.